The primary structure comprises 467 residues: 2-succinylbenzoate--CoA ligase (467 aa).

It belongs to the ATP-dependent AMP-binding enzyme family. MenE subfamily.

It catalyses the reaction 2-succinylbenzoate + ATP + CoA = 2-succinylbenzoyl-CoA + AMP + diphosphate. It functions in the pathway quinol/quinone metabolism; 1,4-dihydroxy-2-naphthoate biosynthesis; 1,4-dihydroxy-2-naphthoate from chorismate: step 5/7. The protein operates within quinol/quinone metabolism; menaquinone biosynthesis. Converts 2-succinylbenzoate (OSB) to 2-succinylbenzoyl-CoA (OSB-CoA). The polypeptide is 2-succinylbenzoate--CoA ligase (Listeria innocua serovar 6a (strain ATCC BAA-680 / CLIP 11262)).